The primary structure comprises 290 residues: Arylamine N-acetyltransferase 1 (290 aa).

An N-acetylmethionine modification is found at M1. The Acyl-thioester intermediate role is filled by C68. S103 serves as a coordination point for CoA. A substrate-binding site is contributed by 106 to 107 (IH). Residues H107 and D122 contribute to the active site. CoA is bound by residues Y208 and S287.

Belongs to the arylamine N-acetyltransferase family.

The protein localises to the cytoplasm. It catalyses the reaction an arylamine + acetyl-CoA = an N-acetylarylamine + CoA. Functionally, participates in the detoxification of a plethora of hydrazine and arylamine drugs. This is Arylamine N-acetyltransferase 1 (NAT1) from Mesocricetus auratus (Golden hamster).